The chain runs to 428 residues: Adenylosuccinate synthetase (428 aa).

Residues 12-18 and 40-42 contribute to the GTP site; these read GDEGKGK and GHT. The active-site Proton acceptor is D13. Residues D13 and G40 each contribute to the Mg(2+) site. IMP contacts are provided by residues 13–16, 38–41, T130, R144, Q225, T240, and R304; these read DEGK and NAGH. H41 acts as the Proton donor in catalysis. 300 to 306 is a binding site for substrate; that stretch reads VTTGRAR. GTP contacts are provided by residues R306, 332-334, and 414-416; these read KID and SVG.

It belongs to the adenylosuccinate synthetase family. In terms of assembly, homodimer. It depends on Mg(2+) as a cofactor.

It localises to the cytoplasm. It carries out the reaction IMP + L-aspartate + GTP = N(6)-(1,2-dicarboxyethyl)-AMP + GDP + phosphate + 2 H(+). It participates in purine metabolism; AMP biosynthesis via de novo pathway; AMP from IMP: step 1/2. Its function is as follows. Plays an important role in the de novo pathway of purine nucleotide biosynthesis. Catalyzes the first committed step in the biosynthesis of AMP from IMP. The sequence is that of Adenylosuccinate synthetase from Clostridium acetobutylicum (strain ATCC 824 / DSM 792 / JCM 1419 / IAM 19013 / LMG 5710 / NBRC 13948 / NRRL B-527 / VKM B-1787 / 2291 / W).